The primary structure comprises 338 residues: tRNA N6-adenosine threonylcarbamoyltransferase (338 aa).

Residues His111 and His115 each coordinate Fe cation. Residues 134 to 138 (LVSGG), Asp167, Gly180, and Asn272 each bind substrate. Residue Asp300 participates in Fe cation binding.

The protein belongs to the KAE1 / TsaD family. Fe(2+) serves as cofactor.

The protein resides in the cytoplasm. It carries out the reaction L-threonylcarbamoyladenylate + adenosine(37) in tRNA = N(6)-L-threonylcarbamoyladenosine(37) in tRNA + AMP + H(+). Required for the formation of a threonylcarbamoyl group on adenosine at position 37 (t(6)A37) in tRNAs that read codons beginning with adenine. Is involved in the transfer of the threonylcarbamoyl moiety of threonylcarbamoyl-AMP (TC-AMP) to the N6 group of A37, together with TsaE and TsaB. TsaD likely plays a direct catalytic role in this reaction. The protein is tRNA N6-adenosine threonylcarbamoyltransferase of Nitrosomonas eutropha (strain DSM 101675 / C91 / Nm57).